The primary structure comprises 182 residues: Large ribosomal subunit protein uL6 (182 aa).

This sequence belongs to the universal ribosomal protein uL6 family. In terms of assembly, part of the 50S ribosomal subunit.

Its function is as follows. This protein binds to the 23S rRNA, and is important in its secondary structure. It is located near the subunit interface in the base of the L7/L12 stalk, and near the tRNA binding site of the peptidyltransferase center. This Carboxydothermus hydrogenoformans (strain ATCC BAA-161 / DSM 6008 / Z-2901) protein is Large ribosomal subunit protein uL6.